The following is a 257-amino-acid chain: Ribonuclease HII (257 aa).

The 187-residue stretch at 71 to 257 (ELIAGIDEVG…EPIKSMVNFK (187 aa)) folds into the RNase H type-2 domain. A divalent metal cation contacts are provided by Asp-77, Glu-78, and Asp-169.

It belongs to the RNase HII family. The cofactor is Mn(2+). It depends on Mg(2+) as a cofactor.

It is found in the cytoplasm. The catalysed reaction is Endonucleolytic cleavage to 5'-phosphomonoester.. Endonuclease that specifically degrades the RNA of RNA-DNA hybrids. This Lactococcus lactis subsp. cremoris (strain MG1363) protein is Ribonuclease HII (rnhB).